We begin with the raw amino-acid sequence, 50 residues long: Conotoxin Bu13 (50 aa).

A signal peptide is located at residue Ala1. Residues 2–24 (EDSRGTQLHRALRKTTKLSLSIR) constitute a propeptide that is removed on maturation. Cystine bridges form between Cys25-Cys40, Cys32-Cys44, and Cys39-Cys49.

Belongs to the conotoxin O1 superfamily. As to expression, expressed by the venom duct.

Its subcellular location is the secreted. The sequence is that of Conotoxin Bu13 from Conus bullatus (Bubble cone).